The chain runs to 187 residues: Large ribosomal subunit protein uL5 (187 aa).

Belongs to the universal ribosomal protein uL5 family. Part of the 50S ribosomal subunit; part of the 5S rRNA/L5/L18/L25 subcomplex. Contacts the 5S rRNA and the P site tRNA. Forms a bridge to the 30S subunit in the 70S ribosome.

Functionally, this is one of the proteins that bind and probably mediate the attachment of the 5S RNA into the large ribosomal subunit, where it forms part of the central protuberance. In the 70S ribosome it contacts protein S13 of the 30S subunit (bridge B1b), connecting the 2 subunits; this bridge is implicated in subunit movement. Contacts the P site tRNA; the 5S rRNA and some of its associated proteins might help stabilize positioning of ribosome-bound tRNAs. This chain is Large ribosomal subunit protein uL5, found in Mycolicibacterium smegmatis (strain ATCC 700084 / mc(2)155) (Mycobacterium smegmatis).